A 188-amino-acid chain; its full sequence is Transmembrane protein 160 (188 aa).

The N-terminal 96 residues, 1–96, are a transit peptide targeting the mitochondrion; it reads MGGGWWWARA…ISFMQSDMGR (96 aa). Residues 24–52 are disordered; it reads PPQRPRSGGARGSFAPGHGPRAGASPPPV. Ser-48 carries the phosphoserine modification. Transmembrane regions (helical) follow at residues 102 to 122 and 135 to 155; these read FFLLGGLCVVWGSASYAVGLA and AAVGAGAVLAASLLWACAVGL. Residues 168 to 188 are disordered; it reads PEDDGTASAEGPDEAGRPPPE.

It belongs to the TMEM160 family.

Its subcellular location is the mitochondrion inner membrane. In Homo sapiens (Human), this protein is Transmembrane protein 160.